The chain runs to 116 residues: Large ribosomal subunit protein bL20 (116 aa).

Belongs to the bacterial ribosomal protein bL20 family.

In terms of biological role, binds directly to 23S ribosomal RNA and is necessary for the in vitro assembly process of the 50S ribosomal subunit. It is not involved in the protein synthesizing functions of that subunit. This Phocaeicola vulgatus (strain ATCC 8482 / DSM 1447 / JCM 5826 / CCUG 4940 / NBRC 14291 / NCTC 11154) (Bacteroides vulgatus) protein is Large ribosomal subunit protein bL20.